The sequence spans 2006 residues: Sodium channel protein type 2 subunit alpha (2006 aa).

Position 4 is a phosphoserine (Ser4). The segment at 28-61 is disordered; the sequence is RIAEEKAKRPKQERKDEDDENGPKPNSDLEAGKS. A Glycyl lysine isopeptide (Lys-Gly) (interchain with G-Cter in SUMO1) cross-link involves residue Lys38. One copy of the I repeat lies at 111–456; that stretch reads ILTPFNPIRK…QQMLEQLKKQ (346 aa). The chain crosses the membrane as a helical span at residues 130–148; that stretch reads LFNVLIMCTILTNCVFMTM. Residues 156–176 traverse the membrane as a helical segment; sequence KNVEYTFTGIYTFESLIKILA. Residues 191 to 208 form a helical membrane-spanning segment; that stretch reads WNWLDFTVITFAYVTEFV. A helical transmembrane segment spans residues 215–231; sequence ALRTFRVLRALKTISVI. The chain crosses the membrane as a helical span at residues 251–270; that stretch reads VMILTVFCLSVFALIGLQLF. Residues Cys278 and Cys338 are joined by a disulfide bond. 6 N-linked (GlcNAc...) asparagine glycosylation sites follow: Asn285, Asn291, Asn297, Asn303, Asn308, and Asn340. Residues 370 to 394 constitute an intramembrane region (pore-forming); it reads FSWAFLSLFRLMTQDFWENLYQLTL. Residues 402–422 form a helical membrane-spanning segment; the sequence is MIFFVLVIFLGSFYLINLILA. Phosphoserine occurs at positions 468, 471, 484, 526, 528, 531, 553, 554, 558, 573, 576, 589, 610, 623, 687, 688, and 722. The segment at 494-529 is disordered; the sequence is SSKSEKELKNRRKKKKQKEQAGEEEKEDAVRKSASE. Residues 511–529 are compositionally biased toward basic and acidic residues; the sequence is KEQAGEEEKEDAVRKSASE. The tract at residues 589–635 is disordered; that stretch reads SENDFADDEHSTFEDNDSRRDSLFVPHRHGERRPSNVSQASRASRGI. The segment covering 596–610 has biased composition (basic and acidic residues); that stretch reads DEHSTFEDNDSRRDS. The II repeat unit spans residues 742-1014; the sequence is CCKPWLKVKH…QIAVGRMQKG (273 aa). A helical transmembrane segment spans residues 761–779; it reads FVDLAITICIVLNTLFMAM. A helical transmembrane segment spans residues 791 to 810; the sequence is VLSVGNLVFTGIFTAEMFLK. A helical membrane pass occupies residues 825 to 844; sequence NIFDGFIVSLSLMELGLANV. A helical membrane pass occupies residues 847–864; that stretch reads LSVLRSFRLLRVFKLAKS. The helical transmembrane segment at 881 to 899 threads the bilayer; the sequence is ALGNLTLVLAIIVFIFAVV. Cysteines 913 and 919 form a disulfide. A binds SCN2B region spans residues 918–919; that stretch reads DC. The segment at residues 929 to 949 is an intramembrane region (pore-forming); the sequence is FFHSFLIVFRVLCGEWIETMW. Cys951 and Cys960 form a disulfide bridge. The helical transmembrane segment at 963–983 threads the bilayer; that stretch reads VFMMVMVIGNLVVLNLFLALL. The interval 1121–1167 is disordered; the sequence is EEFSSESDMEESKEKLNATSSSEGSTVDIGAPAEGEQPEAEPEESLE. Acidic residues predominate over residues 1156–1167; that stretch reads EQPEAEPEESLE. One copy of the III repeat lies at 1191–1505; the sequence is KGKLWWNLRK…KKYYNAMKKL (315 aa). Residues 1211–1228 traverse the membrane as a helical segment; the sequence is FETFIVFMILLSSGALAF. The helical transmembrane segment at 1242-1260 threads the bilayer; the sequence is MLEYADKVFTYIFILEMLL. The chain crosses the membrane as a helical span at residues 1275–1293; sequence WCWLDFLIVDVSLVSLTAN. A helical transmembrane segment spans residues 1302–1320; the sequence is AIKSLRTLRALRPLRALSR. A helical transmembrane segment spans residues 1338–1357; sequence IMNVLLVCLIFWLIFSIMGV. Cys1367 and Cys1387 form a disulfide bridge. An intramembrane region (pore-forming) is located at residues 1410 to 1431; it reads GLGYLSLLQVATFKGWMDIMYA. The helical transmembrane segment at 1449–1470 threads the bilayer; that stretch reads YMYLYFVIFIIFGSFFTLNLFI. Ser1507 carries the phosphoserine modification. Residues 1514–1812 form an IV repeat; that stretch reads IPRPANKFQG…WEKFDPDATQ (299 aa). The chain crosses the membrane as a helical span at residues 1534-1551; it reads FDISIMILICLNMVTMMV. The helical transmembrane segment at 1563 to 1581 threads the bilayer; that stretch reads ILYWINLVFIVLFTGECVL. The helical transmembrane segment at 1594 to 1611 threads the bilayer; it reads GWNIFDFVVVILSIVGMF. A helical membrane pass occupies residues 1625 to 1641; that stretch reads LFRVIRLARIGRILRLI. Residues 1661-1678 form a helical membrane-spanning segment; the sequence is LFNIGLLLFLVMFIYAIF. An intramembrane region (pore-forming) is located at residues 1701–1723; sequence FGNSMICLFQITTSAGWDGLLAP. The cysteines at positions 1732 and 1747 are disulfide-linked. A helical membrane pass occupies residues 1754 to 1776; that stretch reads IFFFVSYIIISFLVVVNMYIAVI. In terms of domain architecture, IQ spans 1906-1935; that stretch reads EEVSAIVIQRAYRRYLLKQKVKKVSSIYKK. At Ser1931 the chain carries Phosphoserine. Basic and acidic residues predominate over residues 1934–1965; it reads KKDKGKEDEGTPIKEDIITDKLNENSTPEKTD. A disordered region spans residues 1934–2006; the sequence is KKDKGKEDEG…KGKDIRESKK (73 aa). 3 positions are modified to phosphothreonine: Thr1944, Thr1964, and Thr1967. The residue at position 1972 (Ser1972) is a Phosphoserine. Positions 1980–2006 are enriched in basic and acidic residues; the sequence is TKPEKEKFEKDKSEKEDKGKDIRESKK.

Belongs to the sodium channel (TC 1.A.1.10) family. Nav1.2/SCN2A subfamily. Heterooligomer of a large alpha subunit and a smaller beta subunit. Heterooligomer with SCN2B or SCN4B; disulfide-linked. Interacts with NEDD4L. Interacts with CALM. Interacts with TMEM233. Sumoylated at Lys-38. Sumoylation is induced by hypoxia, increases voltage-gated sodium current and mediates the early response to acute hypoxia in neurons. Sumoylated SCN2A is located at the cell membrane. In terms of tissue distribution, expressed in brain (at protein level). Detected in hippocampus, cortex and brain stem.

It localises to the cell membrane. The enzyme catalyses Na(+)(in) = Na(+)(out). Mediates the voltage-dependent sodium ion permeability of excitable membranes. Assuming opened or closed conformations in response to the voltage difference across the membrane, the protein forms a sodium-selective channel through which Na(+) ions may pass in accordance with their electrochemical gradient. Implicated in the regulation of hippocampal replay occurring within sharp wave ripples (SPW-R) important for memory. This chain is Sodium channel protein type 2 subunit alpha, found in Mus musculus (Mouse).